The chain runs to 149 residues: Ribonuclease pancreatic (149 aa).

An N-terminal signal peptide occupies residues 1-25 (MGLENSLILFSLLVLVLGWVQPSLG). The interval 25-62 (GKESSPDKFKRQHMDTEGSSKSSPTYCNQMRSPQEMTK) is disordered. The span at 28 to 42 (SSPDKFKRQHMDTEG) shows a compositional bias: basic and acidic residues. Positions 32 and 35 each coordinate substrate. H37 serves as the catalytic Proton acceptor. Residues 43–61 (SSKSSPTYCNQMRSPQEMT) are compositionally biased toward polar residues. Intrachain disulfides connect C51/C109, C65/C120, C83/C135, and C90/C97. Substrate-binding positions include 66–70 (KPVNT) and K91. The active-site Proton donor is the H144.

Belongs to the pancreatic ribonuclease family. As to quaternary structure, monomer. Interacts with and forms tight 1:1 complexes with RNH1. Dimerization of two such complexes may occur. Interaction with RNH1 inhibits this protein.

The protein resides in the secreted. The enzyme catalyses an [RNA] containing cytidine + H2O = an [RNA]-3'-cytidine-3'-phosphate + a 5'-hydroxy-ribonucleotide-3'-[RNA].. It catalyses the reaction an [RNA] containing uridine + H2O = an [RNA]-3'-uridine-3'-phosphate + a 5'-hydroxy-ribonucleotide-3'-[RNA].. In terms of biological role, endonuclease that catalyzes the cleavage of RNA on the 3' side of pyrimidine nucleotides. Acts on single-stranded and double-stranded RNA. This chain is Ribonuclease pancreatic (RNASE1), found in Sundamys muelleri (Mueller's giant sunda rat).